Reading from the N-terminus, the 475-residue chain is Ribulose bisphosphate carboxylase large chain (475 aa).

Positions 1-2 (MS) are excised as a propeptide. P3 is subject to N-acetylproline. An N6,N6,N6-trimethyllysine modification is found at K14. N123 and T173 together coordinate substrate. The active-site Proton acceptor is the K175. Residue K177 coordinates substrate. Residues K201, D203, and E204 each coordinate Mg(2+). An N6-carboxylysine modification is found at K201. The active-site Proton acceptor is the H294. Substrate-binding residues include R295, H327, and S379.

The protein belongs to the RuBisCO large chain family. Type I subfamily. In terms of assembly, heterohexadecamer of 8 large chains and 8 small chains; disulfide-linked. The disulfide link is formed within the large subunit homodimers. The cofactor is Mg(2+). In terms of processing, the disulfide bond which can form in the large chain dimeric partners within the hexadecamer appears to be associated with oxidative stress and protein turnover.

It localises to the plastid. The protein localises to the chloroplast. The enzyme catalyses 2 (2R)-3-phosphoglycerate + 2 H(+) = D-ribulose 1,5-bisphosphate + CO2 + H2O. It carries out the reaction D-ribulose 1,5-bisphosphate + O2 = 2-phosphoglycolate + (2R)-3-phosphoglycerate + 2 H(+). Its function is as follows. RuBisCO catalyzes two reactions: the carboxylation of D-ribulose 1,5-bisphosphate, the primary event in carbon dioxide fixation, as well as the oxidative fragmentation of the pentose substrate in the photorespiration process. Both reactions occur simultaneously and in competition at the same active site. This Buxus microphylla (Littleleaf boxwood) protein is Ribulose bisphosphate carboxylase large chain.